A 172-amino-acid chain; its full sequence is Adenine phosphoribosyltransferase (172 aa).

It belongs to the purine/pyrimidine phosphoribosyltransferase family. As to quaternary structure, homodimer.

The protein resides in the cytoplasm. It carries out the reaction AMP + diphosphate = 5-phospho-alpha-D-ribose 1-diphosphate + adenine. The protein operates within purine metabolism; AMP biosynthesis via salvage pathway; AMP from adenine: step 1/1. Catalyzes a salvage reaction resulting in the formation of AMP, that is energically less costly than de novo synthesis. The chain is Adenine phosphoribosyltransferase from Streptococcus agalactiae serotype Ia (strain ATCC 27591 / A909 / CDC SS700).